The following is a 158-amino-acid chain: Transcription elongation factor GreA (158 aa).

The segment covering 24-43 has biased composition (basic and acidic residues); it reads DVERPKASEAIGEARDKGDL. Positions 24–47 are disordered; it reads DVERPKASEAIGEARDKGDLSENA. The stretch at 48–68 forms a coiled coil; the sequence is EYDAAKEAQGLLEMKISKMEE.

Belongs to the GreA/GreB family.

In terms of biological role, necessary for efficient RNA polymerase transcription elongation past template-encoded arresting sites. The arresting sites in DNA have the property of trapping a certain fraction of elongating RNA polymerases that pass through, resulting in locked ternary complexes. Cleavage of the nascent transcript by cleavage factors such as GreA or GreB allows the resumption of elongation from the new 3'terminus. GreA releases sequences of 2 to 3 nucleotides. This is Transcription elongation factor GreA from Christiangramia forsetii (strain DSM 17595 / CGMCC 1.15422 / KT0803) (Gramella forsetii).